The sequence spans 151 residues: Phosphopantetheine adenylyltransferase (151 aa).

Ser9 lines the substrate pocket. ATP-binding positions include 9–10 (SF) and His17. Substrate is bound by residues Lys41, Thr73, and Arg87. Residues 88-90 (GLR), Glu98, and 122-128 (TSFISSS) contribute to the ATP site.

This sequence belongs to the bacterial CoaD family. In terms of assembly, homohexamer. Requires Mg(2+) as cofactor.

The protein resides in the cytoplasm. The catalysed reaction is (R)-4'-phosphopantetheine + ATP + H(+) = 3'-dephospho-CoA + diphosphate. The protein operates within cofactor biosynthesis; coenzyme A biosynthesis; CoA from (R)-pantothenate: step 4/5. Reversibly transfers an adenylyl group from ATP to 4'-phosphopantetheine, yielding dephospho-CoA (dPCoA) and pyrophosphate. The chain is Phosphopantetheine adenylyltransferase from Flavobacterium psychrophilum (strain ATCC 49511 / DSM 21280 / CIP 103535 / JIP02/86).